Here is a 911-residue protein sequence, read N- to C-terminus: Alpha-actinin-4 (911 aa).

Residues 1-30 are disordered; sequence MVDYHAASQSYQYGPSSAGNGAGGGGSMGD. The segment at 1-269 is actin-binding; the sequence is MVDYHAASQS…YVSSFYHAFS (269 aa). Residues 12–26 are interaction with VCL; sequence QYGPSSAGNGAGGGG. The residue at position 31 (Tyr31) is a Phosphotyrosine. The interval 40–61 is interaction with VCL; it reads RDLLLDPAWEKQQRKTFTAWCN. 2 consecutive Calponin-homology (CH) domains span residues 50–154 and 163–269; these read KQQR…LRFA and TSAK…HAFS. The LXXLL motif motif lies at 84-88; the sequence is LMLLL. The interaction with VCL stretch occupies residues 108-126; it reads KINNVNKALDFIASKGVKL. Residue Lys114 is modified to N6-acetyllysine. The tract at residues 177-192 is polyphosphoinositide (PIP2)-binding; it reads TAPYKNVNVQNFHISW. Lys214 is modified (N6-acetyllysine). Thr249 is modified (phosphothreonine). Spectrin repeat units follow at residues 293–403, 413–518, 528–639, and 649–752; these read HLME…WLLN, HLAE…ALEK, QLHL…ALLE, and HLRR…EVEN. Residues Lys592 and Lys625 each carry the N6-acetyllysine modification. Ser696 carries the phosphoserine modification. Positions 736 to 911 are mediates interaction with MICALL2; it reads WEQLLTTIAR…STALYGESDL (176 aa). EF-hand domains lie at 765-800 and 806-841; these read EQMQ…LGYD and QGEA…ETTD. Asp778 contacts Ca(2+). Position 779 is an N6-acetyllysine (Lys779). Residues Asp780 and Glu789 each coordinate Ca(2+). Residue Lys859 is modified to N6-acetyllysine. Ser909 carries the phosphoserine modification.

The protein belongs to the alpha-actinin family. As to quaternary structure, homodimer; antiparallel. Identified in a IGF2BP1-dependent mRNP granule complex containing untranslated mRNAs. Component of the CART complex, at least composed of ACTN4, HGS/HRS, MYO5B and TRIM3. Binds TRIM3 at the N-terminus. Interacts with MAGI1. Interacts with PDLIM2. Identified in a complex with CASK, IQGAP1, MAGI2, NPHS1, SPTAN1 and SPTBN1. Interacts with MICALL2 (preferentially in opened conformation); stimulated by RAB13 activation. Interacts with PPARG and RARA. Binds to VCL; this interaction triggers VCL conformational changes. Interacts with SEPTIN14. Interacts with IGSF8.

It is found in the nucleus. Its subcellular location is the cytoplasm. It localises to the cell junction. The protein resides in the cytoskeleton. The protein localises to the stress fiber. It is found in the perinuclear region. Its function is as follows. F-actin cross-linking protein which is thought to anchor actin to a variety of intracellular structures. This is a bundling protein. Probably involved in vesicular trafficking via its association with the CART complex. The CART complex is necessary for efficient transferrin receptor recycling but not for EGFR degradation. Involved in tight junction assembly in epithelial cells probably through interaction with MICALL2. Links MICALL2 to the actin cytoskeleton and recruits it to the tight junctions. May also function as a transcriptional coactivator, stimulating transcription mediated by the nuclear hormone receptors PPARG and RARA. Association with IGSF8 regulates the immune synapse formation and is required for efficient T-cell activation. The sequence is that of Alpha-actinin-4 from Pongo abelii (Sumatran orangutan).